The following is a 321-amino-acid chain: PI-PLC X domain-containing protein 3 (321 aa).

Residues 22 to 197 (SIHSIPLTNL…DYQVLVFYHS (176 aa)) enclose the PI-PLC X-box domain. Catalysis depends on residues H37 and H114.

Widely expressed, with highest levels in brain, followed by heart atrium. Not detected in small intestine, nor stomach.

It is found in the cytoplasm. The chain is PI-PLC X domain-containing protein 3 (Plcxd3) from Mus musculus (Mouse).